The sequence spans 712 residues: Saccharolysin (712 aa).

Position 73 is a phosphoserine (S73). H501 is a Zn(2+) binding site. Residue E502 is part of the active site. Zn(2+)-binding residues include H505 and H508.

The protein belongs to the peptidase M3 family. Zn(2+) serves as cofactor.

It localises to the cytoplasm. The catalysed reaction is Cleavage of Pro-|-Phe and Ala-|-Ala bonds.. Could be involved in late stage of protein degradation. This is Saccharolysin (PRD1) from Saccharomyces cerevisiae (strain ATCC 204508 / S288c) (Baker's yeast).